The sequence spans 348 residues: Probable dual-specificity RNA methyltransferase RlmN (348 aa).

The active-site Proton acceptor is the glutamate 93. The 225-residue stretch at 99–323 (TEKRLTACLS…QTRLSNSGIN (225 aa)) folds into the Radical SAM core domain. Cysteine 106 and cysteine 338 form a disulfide bridge. [4Fe-4S] cluster is bound by residues cysteine 113, cysteine 117, and cysteine 120. S-adenosyl-L-methionine contacts are provided by residues 160–161 (GE), serine 190, 219–221 (SLH), and asparagine 295. The active-site S-methylcysteine intermediate is the cysteine 338.

It belongs to the radical SAM superfamily. RlmN family. Requires [4Fe-4S] cluster as cofactor.

Its subcellular location is the cytoplasm. The catalysed reaction is adenosine(2503) in 23S rRNA + 2 reduced [2Fe-2S]-[ferredoxin] + 2 S-adenosyl-L-methionine = 2-methyladenosine(2503) in 23S rRNA + 5'-deoxyadenosine + L-methionine + 2 oxidized [2Fe-2S]-[ferredoxin] + S-adenosyl-L-homocysteine. It carries out the reaction adenosine(37) in tRNA + 2 reduced [2Fe-2S]-[ferredoxin] + 2 S-adenosyl-L-methionine = 2-methyladenosine(37) in tRNA + 5'-deoxyadenosine + L-methionine + 2 oxidized [2Fe-2S]-[ferredoxin] + S-adenosyl-L-homocysteine. In terms of biological role, specifically methylates position 2 of adenine 2503 in 23S rRNA and position 2 of adenine 37 in tRNAs. The sequence is that of Probable dual-specificity RNA methyltransferase RlmN from Prochlorococcus marinus subsp. pastoris (strain CCMP1986 / NIES-2087 / MED4).